We begin with the raw amino-acid sequence, 414 residues long: Isocitrate dehydrogenase [NADP] cytoplasmic (414 aa).

An N-acetylserine modification is found at S2. Y42 is modified (phosphotyrosine). T75–T77 provides a ligand contact to NADP(+). Residue T77 participates in substrate binding. K81 carries the post-translational modification N6-acetyllysine. Residue R82 participates in NADP(+) binding. Residues S94–R100 and R109 contribute to the substrate site. An N6-succinyllysine modification is found at K126. Residues R132 and K212 each coordinate substrate. K224, K233, and K243 each carry N6-acetyllysine. Residue D252 coordinates Mn(2+). Residue K260 coordinates NADP(+). Positions 275 and 279 each coordinate Mn(2+). G310 to H315 is an NADP(+) binding site. An N6-acetyllysine modification is found at K321. N328 serves as a coordination point for NADP(+). A Phosphoserine modification is found at S389. K400 carries the N6-succinyllysine modification.

The protein belongs to the isocitrate and isopropylmalate dehydrogenases family. As to quaternary structure, homodimer. Mg(2+) serves as cofactor. Mn(2+) is required as a cofactor. Post-translationally, acetylation at Lys-374 dramatically reduces catalytic activity.

Its subcellular location is the cytoplasm. The protein localises to the cytosol. It catalyses the reaction D-threo-isocitrate + NADP(+) = 2-oxoglutarate + CO2 + NADPH. Catalyzes the NADP(+)-dependent oxidative decarboxylation of isocitrate (D-threo-isocitrate) to 2-ketoglutarate (2-oxoglutarate), which is required by other enzymes such as the phytanoyl-CoA dioxygenase. Plays a critical role in the generation of NADPH, an important cofactor in many biosynthesis pathways. May act as a corneal epithelial crystallin and may be involved in maintaining corneal epithelial transparency. In Pongo abelii (Sumatran orangutan), this protein is Isocitrate dehydrogenase [NADP] cytoplasmic (IDH1).